The primary structure comprises 808 residues: Phenylalanine--tRNA ligase beta subunit (808 aa).

One can recognise a tRNA-binding domain in the interval 40 to 149; sequence RPELDFVKIV…DQAEVGKTIR (110 aa). The B5 domain maps to 407-484; that stretch reads HKEVRIHTDI…RTKGYDTIQV (78 aa). 4 residues coordinate Mg(2+): Asp462, Asp468, Glu471, and Glu472. The 93-residue stretch at 716–808 folds into the FDX-ACB domain; that stretch reads SQFPEAEIDL…LAGKNGFVLR (93 aa).

Belongs to the phenylalanyl-tRNA synthetase beta subunit family. Type 1 subfamily. Tetramer of two alpha and two beta subunits. Requires Mg(2+) as cofactor.

It is found in the cytoplasm. It carries out the reaction tRNA(Phe) + L-phenylalanine + ATP = L-phenylalanyl-tRNA(Phe) + AMP + diphosphate + H(+). This is Phenylalanine--tRNA ligase beta subunit from Leptospira interrogans serogroup Icterohaemorrhagiae serovar Lai (strain 56601).